Reading from the N-terminus, the 426-residue chain is Glucan endo-1,3-beta-glucosidase 11 (426 aa).

Residues 1–30 (MELTSFHRSSLLFLISLTLIILPTTTTSIG) form the signal peptide. Residue Asn112 is glycosylated (N-linked (GlcNAc...) asparagine). The Proton donor role is filled by Glu121. A glycan (N-linked (GlcNAc...) asparagine) is linked at Asn126. Glu266 (nucleophile) is an active-site residue. Residues 360–372 (GGGTGGGNSSSGG) show a composition bias toward gly residues. A disordered region spans residues 360–389 (GGGTGGGNSSSGGGRDKSPVFPVSPVAPDS). Asn367 carries N-linked (GlcNAc...) asparagine glycosylation. Ser398 carries GPI-anchor amidated serine lipidation. A propeptide spans 399–426 (ASPVTGKRKGKGAILSLVVSMLLARHLL) (removed in mature form).

It belongs to the glycosyl hydrolase 17 family.

The protein localises to the secreted. Its subcellular location is the cell wall. The protein resides in the cell membrane. The catalysed reaction is Hydrolysis of (1-&gt;3)-beta-D-glucosidic linkages in (1-&gt;3)-beta-D-glucans.. The sequence is that of Glucan endo-1,3-beta-glucosidase 11 from Arabidopsis thaliana (Mouse-ear cress).